The following is a 662-amino-acid chain: Probable protein phosphatase 2C 4 (662 aa).

The residue at position 153 (Ser153) is a Phosphoserine. The PPM-type phosphatase domain occupies 249–653; the sequence is DVSLENQNLQ…DDVSIVVISL (405 aa). 4 residues coordinate Mn(2+): Asp286, Gly287, Asp581, and Asp644.

It belongs to the PP2C family. Mg(2+) serves as cofactor. It depends on Mn(2+) as a cofactor. Expressed in seedlings, roots, leaves, stems, young inflorescences, flowers and siliques.

Its subcellular location is the nucleus. It carries out the reaction O-phospho-L-seryl-[protein] + H2O = L-seryl-[protein] + phosphate. The catalysed reaction is O-phospho-L-threonyl-[protein] + H2O = L-threonyl-[protein] + phosphate. In terms of biological role, involved in leaf development regulation. The protein is Probable protein phosphatase 2C 4 (PLL5) of Arabidopsis thaliana (Mouse-ear cress).